Here is a 362-residue protein sequence, read N- to C-terminus: 3-dehydroquinate synthase (362 aa).

Residues 72 to 77 (SGEQAK), 106 to 110 (GVVGD), 130 to 131 (TT), Lys-142, and Lys-151 contribute to the NAD(+) site. Zn(2+) contacts are provided by Glu-184, His-246, and His-263.

This sequence belongs to the sugar phosphate cyclases superfamily. Dehydroquinate synthase family. Requires NAD(+) as cofactor. Co(2+) is required as a cofactor. The cofactor is Zn(2+).

The protein resides in the cytoplasm. The enzyme catalyses 7-phospho-2-dehydro-3-deoxy-D-arabino-heptonate = 3-dehydroquinate + phosphate. It participates in metabolic intermediate biosynthesis; chorismate biosynthesis; chorismate from D-erythrose 4-phosphate and phosphoenolpyruvate: step 2/7. Its function is as follows. Catalyzes the conversion of 3-deoxy-D-arabino-heptulosonate 7-phosphate (DAHP) to dehydroquinate (DHQ). This Bacillus subtilis (strain 168) protein is 3-dehydroquinate synthase.